The primary structure comprises 170 residues: F1 capsule antigen (170 aa).

Positions 1-21 (MKKISSVIAIALFGTIATANA) are cleaved as a signal peptide. The contains potential antigenic determinants that may stimulate T-cells stretch occupies residues 100-150 (GNNHQFTTKVIGKDSRDFDISPKVNGENLVGDDVVLATGSQDFFVRSIGSK).

The protein localises to the secreted. It localises to the capsule. The protein is F1 capsule antigen (caf1) of Yersinia pestis.